The following is a 200-amino-acid chain: Elongation factor Ts (200 aa).

An involved in Mg(2+) ion dislocation from EF-Tu region spans residues 83–86 (TDFA).

It belongs to the EF-Ts family.

It is found in the cytoplasm. In terms of biological role, associates with the EF-Tu.GDP complex and induces the exchange of GDP to GTP. It remains bound to the aminoacyl-tRNA.EF-Tu.GTP complex up to the GTP hydrolysis stage on the ribosome. The protein is Elongation factor Ts of Syntrophobacter fumaroxidans (strain DSM 10017 / MPOB).